A 351-amino-acid polypeptide reads, in one-letter code: MSPPKRFQINAKNYFLTYPRCSLTKEEALSQIRNFQTPTNPKFIKICRELHENGEPHLHVLIQFEGKYKCQNQRFFDLVSPTRSAHFHPNIQGAKSSSDVKSYIDKDGDTWRWGTFQIDGRSARGGQQSANDAYAAALNSGSKSEALKILRELAPRDYLRDFHHISSNLDRIFTKPPPPYENPFPLSSFDRVPEELDEWFHENVMGRARPLRPKSIVIEGDSRTGKTMWSRALGPHNYLCGHLDLSPKVYNNDAWYNVIDDVDPHYLKHFKRIHGGPEDWQSNTKYGKPVQIKGGIPTIFLCNPGPNSSYKEFLDEEKNSALKAWALKNATFISLEGPLYSGTNQGPTQSC.

The region spanning 8 to 116 (QINAKNYFLT…DGDTWRWGTF (109 aa)) is the CRESS-DNA virus Rep endonuclease domain. The RCR-1 motif lies at 15 to 18 (FLTY). Glu49, His57, and His59 together coordinate a divalent metal cation. An RCR-2 motif is present at residues 57–59 (HLH). The For DNA cleavage activity role is filled by Tyr103. The RCR-3 motif lies at 103–106 (YIDK). Position 107 (Asp107) interacts with a divalent metal cation. The segment at 143–153 (KSEALKILREL) is binding to RBR1. The oligomerization stretch occupies residues 156–176 (RDYLRDFHHISSNLDRIFTKP). Residue 220–227 (GDSRTGKT) coordinates ATP.

It belongs to the geminiviridae Rep protein family. As to quaternary structure, homooligomer. Interacts with the replication enhancer protein (REn). Interacts with host retinoblastoma-related protein 1 (RBR1), and may thereby induce the transcription of host replicative enzymes even if the cell is not dividing anymore. Interacts with host PCNA. Interacts with host SCE1 protein. Mg(2+) serves as cofactor. Requires Mn(2+) as cofactor.

The protein resides in the host nucleus. In terms of biological role, essential for the replication of viral ssDNA. The closed circular ssDNA genome is first converted to a superhelical dsDNA. Rep binds a specific region at the genome origin of replication. It introduces an endonucleolytic nick within the conserved sequence 5'-TAATATTAC-3' in the intergenic region of the genome present in all geminiviruses, thereby initiating the rolling circle replication (RCR). Following cleavage, binds covalently to the 5'-phosphate of DNA as a tyrosyl ester. The cleavage gives rise to a free 3'-OH that serves as a primer for the cellular DNA polymerase. The polymerase synthesizes the (+) strand DNA by rolling circle mechanism. After one round of replication, a Rep-catalyzed nucleotidyl transfer reaction releases a circular single-stranded virus genome, thereby terminating the replication. Displays origin-specific DNA cleavage, nucleotidyl transferase, ATPase and helicase activities. The sequence is that of Replication-associated protein from Manihot esculenta (Cassava).